The primary structure comprises 662 residues: Glycogen debranching enzyme (662 aa).

Asp338 (nucleophile) is an active-site residue. Glu373 acts as the Proton donor in catalysis.

This sequence belongs to the glycosyl hydrolase 13 family.

The catalysed reaction is Hydrolysis of (1-&gt;6)-alpha-D-glucosidic linkages to branches with degrees of polymerization of three or four glucose residues in limit dextrin.. The protein operates within glycan degradation; glycogen degradation. Its function is as follows. Removes maltotriose and maltotetraose chains that are attached by 1,6-alpha-linkage to the limit dextrin main chain, generating a debranched limit dextrin. The sequence is that of Glycogen debranching enzyme from Yersinia pestis bv. Antiqua (strain Angola).